The primary structure comprises 370 residues: Phosphoribosylformylglycinamidine cyclo-ligase (370 aa).

This sequence belongs to the AIR synthase family.

Its subcellular location is the cytoplasm. The catalysed reaction is 2-formamido-N(1)-(5-O-phospho-beta-D-ribosyl)acetamidine + ATP = 5-amino-1-(5-phospho-beta-D-ribosyl)imidazole + ADP + phosphate + H(+). The protein operates within purine metabolism; IMP biosynthesis via de novo pathway; 5-amino-1-(5-phospho-D-ribosyl)imidazole from N(2)-formyl-N(1)-(5-phospho-D-ribosyl)glycinamide: step 2/2. This chain is Phosphoribosylformylglycinamidine cyclo-ligase, found in Rhodospirillum rubrum (strain ATCC 11170 / ATH 1.1.1 / DSM 467 / LMG 4362 / NCIMB 8255 / S1).